Consider the following 215-residue polypeptide: UPF0502 protein YceH (215 aa).

Residue Lys-80 is modified to N6-acetyllysine.

The protein belongs to the UPF0502 family.

The chain is UPF0502 protein YceH from Escherichia fergusonii (strain ATCC 35469 / DSM 13698 / CCUG 18766 / IAM 14443 / JCM 21226 / LMG 7866 / NBRC 102419 / NCTC 12128 / CDC 0568-73).